The primary structure comprises 427 residues: Large ribosomal subunit protein uL4 (427 aa).

Residue alanine 2 is modified to N-acetylalanine. Lysine 14 bears the N6-acetyllysine mark. Arginine 97 carries the post-translational modification Omega-N-methylarginine. Lysine 106 carries the post-translational modification N6-acetyllysine. Lysine 239 participates in a covalent cross-link: Glycyl lysine isopeptide (Lys-Gly) (interchain with G-Cter in SUMO2). Lysine 259 is subject to N6-acetyllysine. The residue at position 266 (threonine 266) is a Phosphothreonine. Serine 290 and serine 295 each carry phosphoserine. Position 300 is a citrulline (arginine 300). Lysine 327 is covalently cross-linked (Glycyl lysine isopeptide (Lys-Gly) (interchain with G-Cter in SUMO2)). N6-acetyllysine occurs at positions 333 and 353. Lysine 364 carries the N6-acetyllysine; alternate modification. Lysine 364 is covalently cross-linked (Glycyl lysine isopeptide (Lys-Gly) (interchain with G-Cter in SUMO1); alternate). The residue at position 365 (serine 365) is a Phosphoserine. The interval 369-427 is disordered; sequence AAVAGKKPVVGKKGKKAAVGVKKQKKPLVGKKAAATKKPAPEKKPAEKKPTTEEKKPAA. The segment covering 377–397 has biased composition (basic residues); that stretch reads VVGKKGKKAAVGVKKQKKPLV. Over residues 407–427 the composition is skewed to basic and acidic residues; that stretch reads PAPEKKPAEKKPTTEEKKPAA.

It belongs to the universal ribosomal protein uL4 family. In terms of assembly, component of the large ribosomal subunit. May bind IPO9 with low affinity. Interacts with RBM3. Post-translationally, citrullinated by PADI4.

The protein resides in the cytoplasm. Its function is as follows. Component of the large ribosomal subunit. The ribosome is a large ribonucleoprotein complex responsible for the synthesis of proteins in the cell. In Homo sapiens (Human), this protein is Large ribosomal subunit protein uL4 (RPL4).